A 212-amino-acid chain; its full sequence is Pyridoxine/pyridoxamine 5'-phosphate oxidase (212 aa).

Substrate contacts are provided by residues 8-11 (RREY) and lysine 66. Residues 61 to 66 (RIVLLK), 76 to 77 (FT), arginine 82, lysine 83, and glutamine 105 each bind FMN. The substrate site is built by tyrosine 123, arginine 127, and serine 131. Residues 140 to 141 (QS) and tryptophan 185 contribute to the FMN site. 191–193 (RLH) lines the substrate pocket. FMN is bound at residue arginine 195.

The protein belongs to the pyridoxamine 5'-phosphate oxidase family. Homodimer. It depends on FMN as a cofactor.

It carries out the reaction pyridoxamine 5'-phosphate + O2 + H2O = pyridoxal 5'-phosphate + H2O2 + NH4(+). It catalyses the reaction pyridoxine 5'-phosphate + O2 = pyridoxal 5'-phosphate + H2O2. It participates in cofactor metabolism; pyridoxal 5'-phosphate salvage; pyridoxal 5'-phosphate from pyridoxamine 5'-phosphate: step 1/1. It functions in the pathway cofactor metabolism; pyridoxal 5'-phosphate salvage; pyridoxal 5'-phosphate from pyridoxine 5'-phosphate: step 1/1. Catalyzes the oxidation of either pyridoxine 5'-phosphate (PNP) or pyridoxamine 5'-phosphate (PMP) into pyridoxal 5'-phosphate (PLP). This Shewanella sp. (strain W3-18-1) protein is Pyridoxine/pyridoxamine 5'-phosphate oxidase.